Consider the following 702-residue polypeptide: Vertnin (702 aa).

The segment at 562–625 (VPTLGKGGQE…QGQPHSGPLL (64 aa)) is disordered. The span at 570 to 582 (QEAEEKQEKEAGR) shows a compositional bias: basic and acidic residues.

It belongs to the vertnin family.

The protein localises to the nucleus. Acts as a transcription factor that regulates development of thoracic vertebrae. The chain is Vertnin from Homo sapiens (Human).